The sequence spans 322 residues: ATP-dependent 6-phosphofructokinase (322 aa).

Gly13 is an ATP binding site. 23–27 (RAVVR) is a binding site for ADP. ATP-binding positions include 74–75 (RC) and 104–107 (GDGS). Asp105 contributes to the Mg(2+) binding site. 127 to 129 (TID) contributes to the substrate binding site. The active-site Proton acceptor is the Asp129. Arg156 serves as a coordination point for ADP. Substrate contacts are provided by residues Arg164 and 171–173 (MGR). ADP is bound by residues 187–189 (GAE) and 215–217 (KRH). Substrate is bound by residues Glu224, Arg246, and 252–255 (HIQR).

The protein belongs to the phosphofructokinase type A (PFKA) family. ATP-dependent PFK group I subfamily. Prokaryotic clade 'B1' sub-subfamily. In terms of assembly, homotetramer. Mg(2+) serves as cofactor.

The protein localises to the cytoplasm. The enzyme catalyses beta-D-fructose 6-phosphate + ATP = beta-D-fructose 1,6-bisphosphate + ADP + H(+). The protein operates within carbohydrate degradation; glycolysis; D-glyceraldehyde 3-phosphate and glycerone phosphate from D-glucose: step 3/4. With respect to regulation, allosterically activated by ADP and other diphosphonucleosides, and allosterically inhibited by phosphoenolpyruvate. Catalyzes the phosphorylation of D-fructose 6-phosphate to fructose 1,6-bisphosphate by ATP, the first committing step of glycolysis. The sequence is that of ATP-dependent 6-phosphofructokinase from Paenibacillus macquariensis (Bacillus macquariensis).